The chain runs to 400 residues: S-adenosylmethionine synthase (400 aa).

Histidine 15 serves as a coordination point for ATP. Mg(2+) is bound at residue aspartate 17. Glutamate 43 serves as a coordination point for K(+). The L-methionine site is built by glutamate 56 and glutamine 99. Positions 99-109 (QSLEIGAGVDT) are flexible loop. Residues 174 to 176 (DGK), aspartate 254, 260 to 261 (RK), alanine 277, and lysine 281 contribute to the ATP site. L-methionine is bound at residue aspartate 254. Lysine 285 is a binding site for L-methionine.

This sequence belongs to the AdoMet synthase family. In terms of assembly, homotetramer; dimer of dimers. The cofactor is Mg(2+). Requires K(+) as cofactor.

The protein resides in the cytoplasm. It carries out the reaction L-methionine + ATP + H2O = S-adenosyl-L-methionine + phosphate + diphosphate. It functions in the pathway amino-acid biosynthesis; S-adenosyl-L-methionine biosynthesis; S-adenosyl-L-methionine from L-methionine: step 1/1. Functionally, catalyzes the formation of S-adenosylmethionine (AdoMet) from methionine and ATP. The overall synthetic reaction is composed of two sequential steps, AdoMet formation and the subsequent tripolyphosphate hydrolysis which occurs prior to release of AdoMet from the enzyme. The protein is S-adenosylmethionine synthase of Corynebacterium kroppenstedtii (strain DSM 44385 / JCM 11950 / CIP 105744 / CCUG 35717).